The chain runs to 900 residues: Exosome complex component 10 homolog (900 aa).

Disordered stretches follow at residues 1–31 (MPRT…SEDV) and 147–174 (TSIE…TGTP). A compositionally biased stretch (basic and acidic residues) spans 8-28 (VHQEAKEESAQADQPPKKSAS). Positions 273 to 438 (VVDTVEKLKQ…YVYGRMTNDL (166 aa)) constitute a 3'-5' exonuclease domain. The Mg(2+) site is built by Asp296, Glu298, Asp354, and Asp423. The 81-residue stretch at 485 to 565 (DNRQLYALRG…LKARDQPLVK (81 aa)) folds into the HRDC domain. The disordered stretch occupies residues 731–900 (EQLKRKHPQA…FSNVRKEGKK (170 aa)). Positions 809–826 (RKQKKNQFQRGFKAKNRG) are enriched in basic residues. The span at 878-887 (NNRNNKQFNK) shows a compositional bias: low complexity.

This sequence belongs to the exosome component 10/RRP6 family. As to quaternary structure, component of the RNA exosome complex. Interacts with spn-A/Rad51; the interaction is required for the recruitment of spn-A to the DNA-damage response foci. Interacts with Su(var)3-9, a heterochromatin factor; the interaction promotes association of Rrp6 with a subset of genomic loci. Interacts with Su(var)205, a heterochromatin factor. Interacts with HDAC1, a heterochromatin factor. Mg(2+) serves as cofactor. Salivary gland (at protein level).

It is found in the nucleus. The protein resides in the chromosome. Its subcellular location is the cytoplasm. The protein localises to the cell cortex. It localises to the cytoskeleton. It is found in the microtubule organizing center. The protein resides in the centrosome. Its subcellular location is the spindle. The protein localises to the midbody. In terms of biological role, catalytic component of the RNA exosome complex which has 3'-&gt;5' exoribonuclease activity and participates in a multitude of cellular RNA processing and degradation events. Degrades a large variety of non-coding RNAs that are processed by the exosome, such as pre-rRNAs and some small nucleolar RNAs (snoRNAs). Degrades transcripts derived from different types of heterochromatic repeats, such as subtelomeric minisatellites and simple gagaa repeats. Degrades transcripts derived from transposons and transposon fragments. Degrades chromatin-associated transcripts and contributes to the compaction of heterochromatin. Required for the efficient repair of DNA double-strand breaks via homologous recombination after irradiation. Required for cell proliferation and error-free mitosis. The sequence is that of Exosome complex component 10 homolog from Drosophila melanogaster (Fruit fly).